Consider the following 992-residue polypeptide: Meckelin (992 aa).

The N-terminal stretch at 1–36 (MVTRTRPVAAMAVRSRSSSRTGTAYLLLVLCEVSWA) is a signal peptide. The tract at residues 37 to 280 (QIFSFPFRRP…FHYIFESTAG (244 aa)) is cysteine-rich. Over 37–516 (QIFSFPFRRP…SVKYEMNQGD (480 aa)) the chain is Extracellular. Intrachain disulfides connect C49–C62, C65–C78, C80–C97, C100–C114, C117–C127, C129–C150, C153–C170, C173–C184, C186–C197, C237–C246, C253–C268, and C354–C375. Residue N242 is glycosylated (N-linked (GlcNAc...) asparagine). A helical transmembrane segment spans residues 517–545 (ASVHTDIALGVLGGLAVLSSLLKTAGWKR). The Cytoplasmic segment spans residues 546–555 (RVGSPMIDLQ). Residues 556 to 587 (TVMKFLLYYAGDLANVFFIITVGTGLYWLIFF) traverse the membrane as a helical segment. At 588-600 (KAQKSVSVLLPMP) the chain is on the extracellular side. Residues 601–628 (VQEERFVTYVGCAFAMKALQFLHKFISQ) form a helical membrane-spanning segment. Residues 629 to 667 (ISIDIFFIDWERPKGKVLKAVEGEGGVRSATVPVSIWRT) are Cytoplasmic-facing. Positions 668-676 (YFVANEWNE) form an intramembrane region, helical. The chain crosses the membrane as a discontinuously helical span at residues 668-698 (YFVANEWNEIQTVRKINPLFQVLTTLFFLEV). Residues 677-685 (IQTVRKINP) lie within the membrane without spanning it. The segment at residues 686-698 (LFQVLTTLFFLEV) is an intramembrane region (helical). Residues 699-728 (VGFKNLALMDSSSSLSRNPSDYTAPYSRIL) lie on the Extracellular side of the membrane. An intramembrane region (helical) is located at residues 729 to 754 (RYAVATAIWLVIGIIQVVFFAAFYER). Residues 729-768 (RYAVATAIWLVIGIIQVVFFAAFYERFIEDKIRQFVDLCS) form a discontinuously helical membrane-spanning segment. An intramembrane segment occupies 755–759 (FIEDK). An intramembrane region (helical) is located at residues 760–768 (IRQFVDLCS). Residues 769–923 (MSNVSVFLLS…SIFYNDEGHS (155 aa)) are Cytoplasmic-facing. Residues 924-926 (FSS) constitute an intramembrane region (helical). The chain crosses the membrane as a discontinuously helical span at residues 924 to 949 (FSSVLYYGNEATLLIFDLLFFCVVDL). Residues 927-933 (VLYYGNE) lie within the membrane without spanning it. An intramembrane region (helical) is located at residues 934 to 949 (ATLLIFDLLFFCVVDL). Over 950–954 (ACQDF) the chain is Extracellular. A helical transmembrane segment spans residues 955-982 (VLASFLTYLQQEIFRFIRNTVGQKNLAT). Residues 983 to 992 (KTLVDERFLI) lie on the Cytoplasmic side of the membrane.

Homodimer. Part of the tectonic-like complex (also named B9 complex). Interacts with DNAJB9, DNAJC10 and mutated SFTPC. Interacts with SYNE2 during the early establishment of cell polarity. Interacts (via C-terminus) with FLNA. Interacts with TMEM218. Interacts with WNT5A. Interacts with ROR2.

It localises to the cell membrane. The protein resides in the endoplasmic reticulum membrane. It is found in the cytoplasm. Its subcellular location is the cytoskeleton. The protein localises to the cilium basal body. Part of the tectonic-like complex which is required for tissue-specific ciliogenesis and may regulate ciliary membrane composition. Involved in centrosome migration to the apical cell surface during early ciliogenesis. Required for ciliary structure and function, including a role in regulating length and appropriate number through modulating centrosome duplication. Is a key regulator of stereociliary bundle orientation. Required for epithelial cell branching morphology. Essential for endoplasmic reticulum-associated degradation (ERAD) of surfactant protein C (sftpc). Involved in the negative regulation of canonical Wnt signaling, and activation of the non-canonical cascade stimulated by WNT5A. In non-canonical Wnt signaling, it may act as ROR2 coreceptor. This chain is Meckelin (Tmem67), found in Mus musculus (Mouse).